The following is a 397-amino-acid chain: Protein irld-34 (397 aa).

This Caenorhabditis elegans protein is Protein irld-34.